Here is a 565-residue protein sequence, read N- to C-terminus: NAD-dependent malic enzyme (565 aa).

Y104 serves as the catalytic Proton donor. R157 contributes to the NAD(+) binding site. Residue K175 is the Proton acceptor of the active site. 3 residues coordinate a divalent metal cation: E246, D247, and D270. Residues D270 and N418 each contribute to the NAD(+) site.

It belongs to the malic enzymes family. In terms of assembly, homotetramer. Mg(2+) is required as a cofactor. Requires Mn(2+) as cofactor.

It carries out the reaction (S)-malate + NAD(+) = pyruvate + CO2 + NADH. It catalyses the reaction oxaloacetate + H(+) = pyruvate + CO2. In Escherichia coli O6:H1 (strain CFT073 / ATCC 700928 / UPEC), this protein is NAD-dependent malic enzyme.